Consider the following 321-residue polypeptide: Fe-S cluster assembly protein DRE2 (321 aa).

The tract at residues 1–131 (MERMLLLSPP…KPDFGPENIV (131 aa)) is N-terminal SAM-like domain. Positions 132 to 213 (PLKLGKRKPV…EETLLDGEDM (82 aa)) are linker. C223, C234, C237, and C239 together coordinate [2Fe-2S] cluster. The tract at residues 223–239 (CRPKAGKRRRACKDCTC) is fe-S binding site A. Positions 284, 287, 295, and 298 each coordinate [4Fe-4S] cluster. Short sequence motifs (cx2C motif) lie at residues 284–287 (CGNC) and 295–298 (CDGC). The tract at residues 284-298 (CGNCALGDAFRCDGC) is fe-S binding site B.

This sequence belongs to the anamorsin family. In terms of assembly, monomer. Interacts with TAH18. Interacts with MIA40. [2Fe-2S] cluster serves as cofactor. It depends on [4Fe-4S] cluster as a cofactor.

The protein localises to the cytoplasm. Its subcellular location is the mitochondrion intermembrane space. Component of the cytosolic iron-sulfur (Fe-S) protein assembly (CIA) machinery required for the maturation of extramitochondrial Fe-S proteins. Part of an electron transfer chain functioning in an early step of cytosolic Fe-S biogenesis, facilitating the de novo assembly of a [4Fe-4S] cluster on the scaffold complex CFD1-NBP35. Electrons are transferred to DRE2 from NADPH via the FAD- and FMN-containing protein TAH18. TAH18-DRE2 are also required for the assembly of the diferric tyrosyl radical cofactor of ribonucleotide reductase (RNR), probably by providing electrons for reduction during radical cofactor maturation in the catalytic small subunit RNR2. This chain is Fe-S cluster assembly protein DRE2, found in Coccidioides immitis (strain RS) (Valley fever fungus).